The primary structure comprises 387 residues: GTPase Obg (387 aa).

The Obg domain occupies 1 to 159; the sequence is MKFLDEAKIY…MWVRLEMKLL (159 aa). Residues 160–334 enclose the OBG-type G domain; the sequence is ADVGLVGMPN…LVYHVGGMVK (175 aa). GTP is bound by residues 166 to 173, 191 to 195, 213 to 216, 283 to 286, and 315 to 317; these read GMPNAGKS, FTTLQ, DIPG, SKAD, and SSA. Residues Ser-173 and Thr-193 each contribute to the Mg(2+) site. Positions 347–379 are disordered; sequence LEDAPTRAGSKALRDEHAPSWQDDDDDDDDDDG. Positions 368-379 are enriched in acidic residues; sequence QDDDDDDDDDDG.

It belongs to the TRAFAC class OBG-HflX-like GTPase superfamily. OBG GTPase family. As to quaternary structure, monomer. Mg(2+) serves as cofactor.

The protein resides in the cytoplasm. Its function is as follows. An essential GTPase which binds GTP, GDP and possibly (p)ppGpp with moderate affinity, with high nucleotide exchange rates and a fairly low GTP hydrolysis rate. Plays a role in control of the cell cycle, stress response, ribosome biogenesis and in those bacteria that undergo differentiation, in morphogenesis control. This Magnetococcus marinus (strain ATCC BAA-1437 / JCM 17883 / MC-1) protein is GTPase Obg.